Here is a 680-residue protein sequence, read N- to C-terminus: UvrABC system protein C (680 aa).

The GIY-YIG domain occupies 66 to 144 (NSPGVYRMFN…IKRLRPRFNV (79 aa)). A UVR domain is found at 254–289 (QKVKSHMAEAMNQAAEDLDFERAAIYRDRLAALSHV).

Belongs to the UvrC family. Interacts with UvrB in an incision complex.

It localises to the cytoplasm. Its function is as follows. The UvrABC repair system catalyzes the recognition and processing of DNA lesions. UvrC both incises the 5' and 3' sides of the lesion. The N-terminal half is responsible for the 3' incision and the C-terminal half is responsible for the 5' incision. This chain is UvrABC system protein C, found in Rhizobium johnstonii (strain DSM 114642 / LMG 32736 / 3841) (Rhizobium leguminosarum bv. viciae).